We begin with the raw amino-acid sequence, 492 residues long: GDP-Man:Man(3)GlcNAc(2)-PP-Dol alpha-1,2-mannosyltransferase (492 aa).

The Lumenal segment spans residues M1–S19. A helical membrane pass occupies residues L20–W40. The Cytoplasmic portion of the chain corresponds to G41–K233. Residues L234 to V254 constitute an intramembrane region (helical). At M255–H399 the chain is on the cytoplasmic side. Positions F400 to G420 form an intramembrane region, helical. Topologically, residues G421 to K492 are cytoplasmic.

This sequence belongs to the glycosyltransferase group 1 family. Glycosyltransferase 4 subfamily.

The protein localises to the endoplasmic reticulum membrane. The enzyme catalyses an alpha-D-Man-(1-&gt;3)-[alpha-D-Man-(1-&gt;6)]-beta-D-Man-(1-&gt;4)-beta-D-GlcNAc-(1-&gt;4)-alpha-D-GlcNAc-diphospho-di-trans,poly-cis-dolichol + 2 GDP-alpha-D-mannose = an alpha-D-Man-(1-&gt;2)-alpha-D-Man-(1-&gt;2)-alpha-D-Man-(1-&gt;3)-[alpha-D-Man-(1-&gt;6)]-beta-D-Man-(1-&gt;4)-beta-D-GlcNAc-(1-&gt;4)-alpha-D-GlcNAc-diphospho-di-trans,poly-cis-dolichol + 2 GDP + 2 H(+). Its pathway is protein modification; protein glycosylation. Functionally, GDP-Man:Man(3)GlcNAc(2)-PP-Dol alpha-1,2-mannosyltransferase that operates in the biosynthetic pathway of dolichol-linked oligosaccharides, the glycan precursors employed in protein asparagine (N)-glycosylation. The assembly of dolichol-linked oligosaccharides begins on the cytosolic side of the endoplasmic reticulum membrane and finishes in its lumen. The sequential addition of sugars to dolichol pyrophosphate produces dolichol-linked oligosaccharides containing fourteen sugars, including two GlcNAcs, nine mannoses and three glucoses. Once assembled, the oligosaccharide is transferred from the lipid to nascent proteins by oligosaccharyltransferases. Catalyzes, on the cytoplasmic face of the endoplasmic reticulum, the addition of the fourth and fifth mannose residues to the dolichol-linked oligosaccharide chain, to produce Man(5)GlcNAc(2)-PP-dolichol core oligosaccharide. Man(5)GlcNAc(2)-PP-dolichol is a substrate for ALG3, the following enzyme in the biosynthetic pathway. This Homo sapiens (Human) protein is GDP-Man:Man(3)GlcNAc(2)-PP-Dol alpha-1,2-mannosyltransferase.